The primary structure comprises 447 residues: Cysteine--tRNA ligase (447 aa).

Cys-28 is a binding site for Zn(2+). The short motif at 30 to 40 (PTVYNYIHIGN) is the 'HIGH' region element. Zn(2+) contacts are provided by Cys-211, His-236, and Glu-240. A 'KMSKS' region motif is present at residues 268-272 (KMSKS). Position 271 (Lys-271) interacts with ATP.

Belongs to the class-I aminoacyl-tRNA synthetase family. As to quaternary structure, monomer. Zn(2+) serves as cofactor.

The protein resides in the cytoplasm. The enzyme catalyses tRNA(Cys) + L-cysteine + ATP = L-cysteinyl-tRNA(Cys) + AMP + diphosphate. The protein is Cysteine--tRNA ligase of Streptococcus pyogenes serotype M3 (strain ATCC BAA-595 / MGAS315).